A 155-amino-acid chain; its full sequence is UPF0260 protein NGR_c07710 (155 aa).

Belongs to the UPF0260 family.

The sequence is that of UPF0260 protein NGR_c07710 from Sinorhizobium fredii (strain NBRC 101917 / NGR234).